A 357-amino-acid chain; its full sequence is DNA replication and repair protein RecF (357 aa).

30 to 37 lines the ATP pocket; that stretch reads GANGSGKT.

It belongs to the RecF family.

It localises to the cytoplasm. The RecF protein is involved in DNA metabolism; it is required for DNA replication and normal SOS inducibility. RecF binds preferentially to single-stranded, linear DNA. It also seems to bind ATP. In Escherichia coli O6:K15:H31 (strain 536 / UPEC), this protein is DNA replication and repair protein RecF.